Here is a 66-residue protein sequence, read N- to C-terminus: uncharacterized protein (66 aa).

In terms of domain architecture, HTH cro/C1-type spans 5 to 59; it reads LKYYRALHNLTQEDLAKKLGVSRQTIIAIEKGKYDPSLKLAFKIAKFFGVKIEDI. The H-T-H motif DNA-binding region spans 16 to 35; sequence QEDLAKKLGVSRQTIIAIEK.

This is an uncharacterized protein from Methanocaldococcus jannaschii (strain ATCC 43067 / DSM 2661 / JAL-1 / JCM 10045 / NBRC 100440) (Methanococcus jannaschii).